Here is a 545-residue protein sequence, read N- to C-terminus: Membrane protein insertase YidC (545 aa).

Transmembrane regions (helical) follow at residues 350-370, 424-444, 461-481, and 498-518; these read IIGN…AVLY, LPML…FASV, ADPY…QTYL, and PLVF…YWVV.

Belongs to the OXA1/ALB3/YidC family. Type 1 subfamily. In terms of assembly, interacts with the Sec translocase complex via SecD. Specifically interacts with transmembrane segments of nascent integral membrane proteins during membrane integration.

The protein resides in the cell inner membrane. Functionally, required for the insertion and/or proper folding and/or complex formation of integral membrane proteins into the membrane. Involved in integration of membrane proteins that insert both dependently and independently of the Sec translocase complex, as well as at least some lipoproteins. Aids folding of multispanning membrane proteins. In Neisseria meningitidis serogroup B (strain ATCC BAA-335 / MC58), this protein is Membrane protein insertase YidC.